The chain runs to 431 residues: Enolase (431 aa).

Gln167 is a (2R)-2-phosphoglycerate binding site. Catalysis depends on Glu209, which acts as the Proton donor. Residues Asp246, Glu287, and Asp314 each contribute to the Mg(2+) site. Lys339, Arg368, Ser369, and Lys390 together coordinate (2R)-2-phosphoglycerate. Lys339 serves as the catalytic Proton acceptor.

Belongs to the enolase family. Mg(2+) serves as cofactor.

It localises to the cytoplasm. The protein localises to the secreted. The protein resides in the cell surface. The catalysed reaction is (2R)-2-phosphoglycerate = phosphoenolpyruvate + H2O. Its pathway is carbohydrate degradation; glycolysis; pyruvate from D-glyceraldehyde 3-phosphate: step 4/5. Catalyzes the reversible conversion of 2-phosphoglycerate (2-PG) into phosphoenolpyruvate (PEP). It is essential for the degradation of carbohydrates via glycolysis. The chain is Enolase from Prochlorococcus marinus (strain MIT 9303).